The following is a 226-amino-acid chain: PKHD-type hydroxylase HNE_2117 (226 aa).

In terms of domain architecture, Fe2OG dioxygenase spans 78 to 178 (TVLTPRFNRY…RLASFLWTQS (101 aa)). Fe cation contacts are provided by His96, Asp98, and His159. Position 169 (Arg169) interacts with 2-oxoglutarate.

Requires Fe(2+) as cofactor. It depends on L-ascorbate as a cofactor.

The sequence is that of PKHD-type hydroxylase HNE_2117 from Hyphomonas neptunium (strain ATCC 15444).